A 2326-amino-acid chain; its full sequence is Chondroitin sulfate proteoglycan 4 (2326 aa).

The signal sequence occupies residues 1 to 29; sequence MLLSPGHPLSAPALALILTLALLVRSTAP. 2 Laminin G-like domains span residues 30–193 and 203–381; these read ASFF…HEGC and VGLG…AAGC. Residues 30–640 are globular or compact configuration stabilized by disulfide bonds; that stretch reads ASFFGENHLE…HRGGPAQDLT (611 aa). The segment at 30-640 is neurite growth inhibition; the sequence is ASFFGENHLE…HRGGPAQDLT (611 aa). At 30-2225 the chain is on the extracellular side; sequence ASFFGENHLE…SGFLGFLEAN (2196 aa). N-linked (GlcNAc...) asparagine glycosylation occurs at Asn130. Cys170 and Cys193 are disulfide-bonded. A glycan (N-linked (GlcNAc...) asparagine) is linked at Asn349. Cys355 and Cys381 are joined by a disulfide. A glycan (N-linked (GlcNAc...) asparagine) is linked at Asn428. 3 CSPG repeats span residues 429–524, 554–646, and 663–765; these read FTQL…LEVS, PRIV…VSDG, and AIQI…LEVQ. An interaction with COL6A2 region spans residues 575-1044; that stretch reads GPEIFQAYDP…RGGQRLLTTD (470 aa). The tract at residues 632 to 1450 is interaction with COL5A1; that stretch reads RGGPAQDLTF…SETQTDGFIL (819 aa). Asn686 and Asn773 each carry an N-linked (GlcNAc...) asparagine glycan. CSPG repeat units follow at residues 784–882 and 902–993; these read TVWM…FRVT and NAPV…FVAT. Ser999 carries O-linked (Xyl...) (chondroitin sulfate) serine glycosylation. CSPG repeat units follow at residues 1022–1114, 1130–1220, 1242–1341, 1360–1453, 1477–1567, 1585–1683, 1708–1807, 1836–1928, and 1945–2033; these read APVQ…VSDG, YLHV…LSVA, PLQL…LDVA, TVIP…LLAN, PPVI…LSDG, LLSL…LLLS, PSRL…FRAH, PPQP…MSDG, and TIEV…VLAL. N-linked (GlcNAc...) asparagine glycans are attached at residues Asn1135 and Asn1206. N-linked (GlcNAc...) asparagine glycans are attached at residues Asn1368 and Asn1453. A neurite growth inhibition region spans residues 1590-2225; that stretch reads GSRKLTVCPE…SGFLGFLEAN (636 aa). The segment at 1591-2225 is cysteine-containing; sequence SRKLTVCPES…SGFLGFLEAN (635 aa). Asn1649 carries an N-linked (GlcNAc...) asparagine glycan. N-linked (GlcNAc...) asparagine glycans are attached at residues Asn1913, Asn2020, Asn2038, Asn2044, and Asn2079. The stretch at 2042 to 2151 is one CSPG 15 repeat; the sequence is TVNVTVQALL…TGDRLTLELQ (110 aa). The interval 2187-2210 is disordered; sequence RTETEKTGKSTPTGQPGQAASSPM. The segment covering 2195–2210 has biased composition (polar residues); that stretch reads KSTPTGQPGQAASSPM. A helical membrane pass occupies residues 2226 to 2250; that stretch reads MFSVIIPVCLVLLLLALILPLLFYL. Topologically, residues 2251–2326 are cytoplasmic; the sequence is RKRNKTGKHD…PALRNGQYWV (76 aa). The residue at position 2256 (Thr2256) is a Phosphothreonine; by PKC/PRKCA. The PDZ-binding motif lies at 2324 to 2326; that stretch reads YWV.

As to quaternary structure, interacts with GRIP1, GRIP2 and GRIA2. Forms a ternary complex with GRIP1 and GRIA2. Interacts with ITGA4 through its chondroitin sulfate glycosaminoglycan. Interacts with BCAR1, CDC42 and ACK1. Interacts with MMP16. Interacts with the first PDZ domain of MPDZ. Interacts with PRKCA. Interacts with LGALS3 and the integrin composed of ITGB1 and ITGA3. Binds TNC, laminin-1, COL5A1 and COL6A2. Interacts with PLG and angiostatin. Binds FGF2 and PDGFA. In terms of processing, N-glycosylated. O-glycosylated; contains glycosaminoglycan chondroitin sulfate which are required for proper localization and function in stress fiber formation. Involved in interaction with MMP16 and ITGA4. Post-translationally, phosphorylation by PRKCA regulates its subcellular location and function in cell motility. Neural cells and also extraneural tissues, especially in the developing mesenchyme.

Its subcellular location is the cell membrane. It is found in the apical cell membrane. It localises to the cell projection. The protein resides in the lamellipodium membrane. The protein localises to the cell surface. Proteoglycan playing a role in cell proliferation and migration which stimulates endothelial cells motility during microvascular morphogenesis. May also inhibit neurite outgrowth and growth cone collapse during axon regeneration. Cell surface receptor for collagen alpha 2(VI) which may confer cells ability to migrate on that substrate. Binds through its extracellular N-terminus growth factors, extracellular matrix proteases modulating their activity. May regulate MPP16-dependent degradation and invasion of type I collagen participating in melanoma cells invasion properties. May modulate the plasminogen system by enhancing plasminogen activation and inhibiting angiostatin. Also functions as a signal transducing protein by binding through its cytoplasmic C-terminus scaffolding and signaling proteins. May promote retraction fiber formation and cell polarization through Rho GTPase activation. May stimulate alpha-4, beta-1 integrin-mediated adhesion and spreading by recruiting and activating a signaling cascade through CDC42, ACK1 and BCAR1. May activate FAK and ERK1/ERK2 signaling cascades. The chain is Chondroitin sulfate proteoglycan 4 (Cspg4) from Rattus norvegicus (Rat).